Here is an 84-residue protein sequence, read N- to C-terminus: uncharacterized protein (84 aa).

The chain crosses the membrane as a helical span at residues 7 to 23 (AFSGVIALYGGYLYLRL).

The protein resides in the membrane. This is an uncharacterized protein from Haemophilus influenzae (strain ATCC 51907 / DSM 11121 / KW20 / Rd).